The sequence spans 256 residues: 1-(5-phosphoribosyl)-5-[(5-phosphoribosylamino)methylideneamino] imidazole-4-carboxamide isomerase (256 aa).

The active-site Proton acceptor is D9. D130 (proton donor) is an active-site residue.

Belongs to the HisA/HisF family.

It localises to the cytoplasm. The enzyme catalyses 1-(5-phospho-beta-D-ribosyl)-5-[(5-phospho-beta-D-ribosylamino)methylideneamino]imidazole-4-carboxamide = 5-[(5-phospho-1-deoxy-D-ribulos-1-ylimino)methylamino]-1-(5-phospho-beta-D-ribosyl)imidazole-4-carboxamide. Its pathway is amino-acid biosynthesis; L-histidine biosynthesis; L-histidine from 5-phospho-alpha-D-ribose 1-diphosphate: step 4/9. This Prochlorococcus marinus (strain SARG / CCMP1375 / SS120) protein is 1-(5-phosphoribosyl)-5-[(5-phosphoribosylamino)methylideneamino] imidazole-4-carboxamide isomerase.